The sequence spans 238 residues: uncharacterized protein (238 aa).

Helical transmembrane passes span 6-26 (METLIRLFVSILIICVLALMI), 45-65 (FILLYFCGFKYLILLLSFFIL), 98-118 (IPILFAILAIFGFNWALIGYI), 160-180 (IFGTLAGVLGAFLIGLFGYLL), and 186-206 (IVLCGTAGGIAGNLADSLVGA).

Belongs to the TMEM19 family.

The protein localises to the cell membrane. This is an uncharacterized protein from Methanocaldococcus jannaschii (strain ATCC 43067 / DSM 2661 / JAL-1 / JCM 10045 / NBRC 100440) (Methanococcus jannaschii).